Here is a 561-residue protein sequence, read N- to C-terminus: Dihydroxy-acid dehydratase 3 (561 aa).

Cys-50 is a [2Fe-2S] cluster binding site. Residue Asp-82 participates in Mg(2+) binding. Residue Cys-123 coordinates [2Fe-2S] cluster. Residues Asp-124 and Lys-125 each contribute to the Mg(2+) site. Residue Lys-125 is modified to N6-carboxylysine. Cys-195 is a [2Fe-2S] cluster binding site. Mg(2+) is bound at residue Glu-447. Ser-473 functions as the Proton acceptor in the catalytic mechanism.

Belongs to the IlvD/Edd family. Homodimer. [2Fe-2S] cluster serves as cofactor. Mg(2+) is required as a cofactor.

The catalysed reaction is (2R)-2,3-dihydroxy-3-methylbutanoate = 3-methyl-2-oxobutanoate + H2O. It carries out the reaction (2R,3R)-2,3-dihydroxy-3-methylpentanoate = (S)-3-methyl-2-oxopentanoate + H2O. It functions in the pathway amino-acid biosynthesis; L-isoleucine biosynthesis; L-isoleucine from 2-oxobutanoate: step 3/4. Its pathway is amino-acid biosynthesis; L-valine biosynthesis; L-valine from pyruvate: step 3/4. In terms of biological role, functions in the biosynthesis of branched-chain amino acids. Catalyzes the dehydration of (2R,3R)-2,3-dihydroxy-3-methylpentanoate (2,3-dihydroxy-3-methylvalerate) into 2-oxo-3-methylpentanoate (2-oxo-3-methylvalerate) and of (2R)-2,3-dihydroxy-3-methylbutanoate (2,3-dihydroxyisovalerate) into 2-oxo-3-methylbutanoate (2-oxoisovalerate), the penultimate precursor to L-isoleucine and L-valine, respectively. This is Dihydroxy-acid dehydratase 3 from Bordetella bronchiseptica (strain ATCC BAA-588 / NCTC 13252 / RB50) (Alcaligenes bronchisepticus).